The chain runs to 446 residues: CBL-interacting protein kinase 8 (446 aa).

The Protein kinase domain maps to 13-266; the sequence is YEVGRTIGEG…IEEIRNDEWF (254 aa). ATP contacts are provided by residues 19–27 and K42; that span reads IGEGTFAKV. D136 serves as the catalytic Proton acceptor. An activation loop region spans residues 154–181; sequence DFGLSAWPAQGGALLRTTCGTPNYVAPE. The NAF domain maps to 301-329; sequence LDDEAGPLTLNAFDLIILSQGLNLAALFD. The PPI stretch occupies residues 336–365; it reads KLQNRFLSRKPAKVIMSSMEVVAQSMGYKT.

This sequence belongs to the protein kinase superfamily. CAMK Ser/Thr protein kinase family. SNF1 subfamily. It depends on Mn(2+) as a cofactor.

It carries out the reaction L-seryl-[protein] + ATP = O-phospho-L-seryl-[protein] + ADP + H(+). The enzyme catalyses L-threonyl-[protein] + ATP = O-phospho-L-threonyl-[protein] + ADP + H(+). In terms of biological role, CIPK serine-threonine protein kinases interact with CBL proteins. Binding of a CBL protein to the regulatory NAF domain of CIPK protein lead to the activation of the kinase in a calcium-dependent manner. The polypeptide is CBL-interacting protein kinase 8 (CIPK8) (Oryza sativa subsp. japonica (Rice)).